The primary structure comprises 124 residues: MPTINQLIRKPRKSQTEKTASPALQNCPQRRGICTRVMTVTPKKPNSALRKVARVRLSNGFEVTAYIPGIGHNLQEHSVVLIRGGRVKDLPGVRYHIVRGAKDTLGVNNRKKGRSKYGTKKPKA.

Positions 1 to 27 are disordered; it reads MPTINQLIRKPRKSQTEKTASPALQNC. Positions 17–27 are enriched in polar residues; sequence EKTASPALQNC. Aspartate 89 bears the 3-methylthioaspartic acid mark.

It belongs to the universal ribosomal protein uS12 family. In terms of assembly, part of the 30S ribosomal subunit. Contacts proteins S8 and S17. May interact with IF1 in the 30S initiation complex.

In terms of biological role, with S4 and S5 plays an important role in translational accuracy. Its function is as follows. Interacts with and stabilizes bases of the 16S rRNA that are involved in tRNA selection in the A site and with the mRNA backbone. Located at the interface of the 30S and 50S subunits, it traverses the body of the 30S subunit contacting proteins on the other side and probably holding the rRNA structure together. The combined cluster of proteins S8, S12 and S17 appears to hold together the shoulder and platform of the 30S subunit. The sequence is that of Small ribosomal subunit protein uS12 from Borreliella afzelii (strain PKo) (Borrelia afzelii).